Reading from the N-terminus, the 554-residue chain is Eukaryotic translation initiation factor 3 subunit D-2 (554 aa).

The interval 291–305 (QFDLLTVNETALEPP) is RNA gate. The interval 530–554 (NAFDSDGNEDEETSEDRPFLKSMAN) is disordered.

This sequence belongs to the eIF-3 subunit D family. Component of the eukaryotic translation initiation factor 3 (eIF-3) complex. The eIF-3 complex interacts with pix.

The protein localises to the cytoplasm. Functionally, mRNA cap-binding component of the eukaryotic translation initiation factor 3 (eIF-3) complex, which is involved in protein synthesis of a specialized repertoire of mRNAs and, together with other initiation factors, stimulates binding of mRNA and methionyl-tRNAi to the 40S ribosome. The eIF-3 complex specifically targets and initiates translation of a subset of mRNAs involved in cell proliferation. In the eIF-3 complex, eif3d specifically recognizes and binds the 7-methylguanosine cap of a subset of mRNAs. The polypeptide is Eukaryotic translation initiation factor 3 subunit D-2 (Drosophila mojavensis (Fruit fly)).